Reading from the N-terminus, the 319-residue chain is Acetyl-coenzyme A carboxylase carboxyl transferase subunit alpha (319 aa).

Residues 35–296 (DLDKEIEQLE…KATLVANLAE (262 aa)) form the CoA carboxyltransferase C-terminal domain.

The protein belongs to the AccA family. Acetyl-CoA carboxylase is a heterohexamer composed of biotin carboxyl carrier protein (AccB), biotin carboxylase (AccC) and two subunits each of ACCase subunit alpha (AccA) and ACCase subunit beta (AccD).

It is found in the cytoplasm. The catalysed reaction is N(6)-carboxybiotinyl-L-lysyl-[protein] + acetyl-CoA = N(6)-biotinyl-L-lysyl-[protein] + malonyl-CoA. The protein operates within lipid metabolism; malonyl-CoA biosynthesis; malonyl-CoA from acetyl-CoA: step 1/1. Its function is as follows. Component of the acetyl coenzyme A carboxylase (ACC) complex. First, biotin carboxylase catalyzes the carboxylation of biotin on its carrier protein (BCCP) and then the CO(2) group is transferred by the carboxyltransferase to acetyl-CoA to form malonyl-CoA. The chain is Acetyl-coenzyme A carboxylase carboxyl transferase subunit alpha from Photobacterium profundum (strain SS9).